Reading from the N-terminus, the 104-residue chain is Large ribosomal subunit protein bL21 (104 aa).

Belongs to the bacterial ribosomal protein bL21 family. In terms of assembly, part of the 50S ribosomal subunit. Contacts protein L20.

Functionally, this protein binds to 23S rRNA in the presence of protein L20. The polypeptide is Large ribosomal subunit protein bL21 (Helicobacter pylori (strain G27)).